A 347-amino-acid polypeptide reads, in one-letter code: GMP reductase (347 aa).

108–131 (ADFEKTVQILALDPALNFVCIDVA) lines the NADP(+) pocket. Residues G181 and G183 each contribute to the K(+) site. Catalysis depends on C186, which acts as the Thioimidate intermediate. 216-239 (IVSDGGCTMPGDVAKAFGGGADFV) is a binding site for NADP(+).

It belongs to the IMPDH/GMPR family. GuaC type 1 subfamily. Homotetramer.

The enzyme catalyses IMP + NH4(+) + NADP(+) = GMP + NADPH + 2 H(+). Functionally, catalyzes the irreversible NADPH-dependent deamination of GMP to IMP. It functions in the conversion of nucleobase, nucleoside and nucleotide derivatives of G to A nucleotides, and in maintaining the intracellular balance of A and G nucleotides. The chain is GMP reductase from Salmonella paratyphi B (strain ATCC BAA-1250 / SPB7).